Reading from the N-terminus, the 360-residue chain is Alpha-2-HS-glycoprotein (360 aa).

The first 15 residues, 1 to 15, serve as a signal peptide directing secretion; that stretch reads LVLLLSLAQLWSCHL. Positions 24–130 constitute a Cystatin fetuin-A-type 1 domain; it reads YREHNCDDPE…QFTVLSAKCD (107 aa). Intrachain disulfides connect cysteine 29/cysteine 351, cysteine 86/cysteine 97, cysteine 111/cysteine 129, cysteine 143/cysteine 146, cysteine 205/cysteine 216, and cysteine 227/cysteine 244. A glycan (N-linked (GlcNAc...) asparagine) is linked at asparagine 96. Serine 131 is modified (phosphoserine). Threonine 132 is subject to Phosphothreonine. Phosphoserine is present on serine 135. Residues 141-252 enclose the Cystatin fetuin-A-type 2 domain; it reads KLCPDCPLLT…TCTIFPAQPV (112 aa). N-linked (GlcNAc...) asparagine glycosylation occurs at asparagine 153. Positions 260–285 are disordered; the sequence is VAGAAAVEPAPAVDPASPVSPPDGQS. Threonine 312 carries the phosphothreonine modification. Serine 318, serine 321, and serine 323 each carry phosphoserine.

This sequence belongs to the fetuin family. Post-translationally, phosphorylated by FAM20C in the extracellular medium. Bone marrow.

The protein localises to the secreted. A cell adhesion protein that binds immature cells of the granulocyte lineage. This is Alpha-2-HS-glycoprotein (AHSG) from Oryctolagus cuniculus (Rabbit).